The following is a 167-amino-acid chain: MYPCERVGLSFTETAPYLFRNTVDLAITPEQLFEVLADPQAWPRWATVITKVTWTSPEPFGAGTTRIVEMRGGIVGDEEFISWEPFTRMAFRFNECSTRAVGAFAEDYRVQAIPGGCRLTWTMAQKLAGPARPALFVFRPLLNLALRRFLRNLRRYTDARFAAAQQS.

This is an uncharacterized protein from Mycobacterium tuberculosis (strain CDC 1551 / Oshkosh).